We begin with the raw amino-acid sequence, 240 residues long: Adenylate dimethylallyltransferase (240 aa).

It belongs to the isopentenyl transferase family.

The catalysed reaction is dimethylallyl diphosphate + AMP = N(6)-(dimethylallyl)adenosine 5'-phosphate + diphosphate. Its function is as follows. Transfers dimethylallyl groups to AMP as part of the biosynthesis of cytokinin phytohormones. The sequence is that of Adenylate dimethylallyltransferase (ipt) from Agrobacterium vitis (Rhizobium vitis).